The primary structure comprises 123 residues: Large ribosomal subunit protein uL14 (123 aa).

Belongs to the universal ribosomal protein uL14 family. Part of the 50S ribosomal subunit. Forms a cluster with proteins L3 and L19. In the 70S ribosome, L14 and L19 interact and together make contacts with the 16S rRNA in bridges B5 and B8.

Binds to 23S rRNA. Forms part of two intersubunit bridges in the 70S ribosome. The sequence is that of Large ribosomal subunit protein uL14 from Buchnera aphidicola subsp. Cinara cedri (strain Cc).